The following is a 293-amino-acid chain: Ribosomal protein L11 methyltransferase (293 aa).

The S-adenosyl-L-methionine site is built by Thr-145, Gly-166, Asp-188, and Asn-230.

The protein belongs to the methyltransferase superfamily. PrmA family.

It localises to the cytoplasm. The catalysed reaction is L-lysyl-[protein] + 3 S-adenosyl-L-methionine = N(6),N(6),N(6)-trimethyl-L-lysyl-[protein] + 3 S-adenosyl-L-homocysteine + 3 H(+). Functionally, methylates ribosomal protein L11. The chain is Ribosomal protein L11 methyltransferase from Shewanella putrefaciens (strain CN-32 / ATCC BAA-453).